The following is a 340-amino-acid chain: Phosphoribosylformylglycinamidine cyclo-ligase (340 aa).

The protein belongs to the AIR synthase family.

The protein localises to the cytoplasm. The enzyme catalyses 2-formamido-N(1)-(5-O-phospho-beta-D-ribosyl)acetamidine + ATP = 5-amino-1-(5-phospho-beta-D-ribosyl)imidazole + ADP + phosphate + H(+). It participates in purine metabolism; IMP biosynthesis via de novo pathway; 5-amino-1-(5-phospho-D-ribosyl)imidazole from N(2)-formyl-N(1)-(5-phospho-D-ribosyl)glycinamide: step 2/2. The chain is Phosphoribosylformylglycinamidine cyclo-ligase from Lactococcus lactis subsp. cremoris (strain MG1363).